The following is a 301-amino-acid chain: Acetyl-coenzyme A carboxylase carboxyl transferase subunit beta (301 aa).

Residues 25–294 (LWIKCPETGE…SAANDMNSGA (270 aa)) form the CoA carboxyltransferase N-terminal domain.

This sequence belongs to the AccD/PCCB family. In terms of assembly, acetyl-CoA carboxylase is a heterohexamer composed of biotin carboxyl carrier protein (AccB), biotin carboxylase (AccC) and two subunits each of ACCase subunit alpha (AccA) and ACCase subunit beta (AccD).

Its subcellular location is the cytoplasm. It catalyses the reaction N(6)-carboxybiotinyl-L-lysyl-[protein] + acetyl-CoA = N(6)-biotinyl-L-lysyl-[protein] + malonyl-CoA. It functions in the pathway lipid metabolism; malonyl-CoA biosynthesis; malonyl-CoA from acetyl-CoA: step 1/1. In terms of biological role, component of the acetyl coenzyme A carboxylase (ACC) complex. Biotin carboxylase (BC) catalyzes the carboxylation of biotin on its carrier protein (BCCP) and then the CO(2) group is transferred by the transcarboxylase to acetyl-CoA to form malonyl-CoA. The protein is Acetyl-coenzyme A carboxylase carboxyl transferase subunit beta of Rhizobium leguminosarum bv. trifolii (strain WSM1325).